The following is a 389-amino-acid chain: Succinate--CoA ligase [ADP-forming] subunit beta (389 aa).

In terms of domain architecture, ATP-grasp spans 9-244 (KQLLAEYGIP…KTQEDETEVT (236 aa)). ATP-binding positions include Lys46, 53–55 (GRG), Gly102, and Glu107. Residues Asn199 and Asp213 each contribute to the Mg(2+) site. Residues Asn264 and 321–323 (GIV) contribute to the substrate site.

Belongs to the succinate/malate CoA ligase beta subunit family. In terms of assembly, heterotetramer of two alpha and two beta subunits. Mg(2+) serves as cofactor.

The enzyme catalyses succinate + ATP + CoA = succinyl-CoA + ADP + phosphate. It catalyses the reaction GTP + succinate + CoA = succinyl-CoA + GDP + phosphate. It participates in carbohydrate metabolism; tricarboxylic acid cycle; succinate from succinyl-CoA (ligase route): step 1/1. In terms of biological role, succinyl-CoA synthetase functions in the citric acid cycle (TCA), coupling the hydrolysis of succinyl-CoA to the synthesis of either ATP or GTP and thus represents the only step of substrate-level phosphorylation in the TCA. The beta subunit provides nucleotide specificity of the enzyme and binds the substrate succinate, while the binding sites for coenzyme A and phosphate are found in the alpha subunit. The polypeptide is Succinate--CoA ligase [ADP-forming] subunit beta (Xanthomonas campestris pv. campestris (strain 8004)).